The chain runs to 526 residues: DDB1- and CUL4-associated factor 17 (526 aa).

2 helical membrane passes run 200–220 (ILMRVAAFQVFPLQLVGMLEI) and 237–257 (GVLAVSHSSKLVRLYSFEYIV).

It is found in the membrane. It localises to the nucleus. Its subcellular location is the nucleolus. The protein operates within protein modification; protein ubiquitination. Its function is as follows. May function as a substrate receptor for CUL4-DDB1 E3 ubiquitin-protein ligase complex. This Danio rerio (Zebrafish) protein is DDB1- and CUL4-associated factor 17 (dcaf17).